The following is a 386-amino-acid chain: MAESNFVDYVKIYCRSGKGGRGSTHMRREKYTPNGGPDGGDGGRGGHVILRGNRNYWTLLHLRYDRHAMAGHGESGSKNRSFGKDGADKIIEVPCGTVVYNAETGEYVCDVTEHGQEVILLKGGRGGLGNWHFKTATRQAPRFAQPGEPMQEMTVILELKLLADVGLVGFPNAGKSTLLSAISAAKPKIADYPFTTLEPNLGIVSYRDGQSFVMADIPGIIEGASEGKGLGLRFLRHIERNSLLLFMIPADSDDIRKDYEVLLNELKTFNPEMLDKQRVLAITKSDMLDQELMDEIEPTLPEGIPHVFISSVSGLGISVLKDILWTELNKESNKIEAIVHRPKDVSRLQQELKDMGEDEELDYEYEDDGDEDDLDYEYEEEDWEDK.

The region spanning serine 4–leucine 162 is the Obg domain. Residues lysine 18–glycine 45 form a disordered region. Gly residues predominate over residues glycine 36–glycine 45. The OBG-type G domain maps to alanine 163–asparagine 329. GTP-binding positions include glycine 169–serine 176, phenylalanine 194–glutamate 198, aspartate 216–glycine 219, threonine 283–aspartate 286, and serine 310–valine 312. Serine 176 and threonine 196 together coordinate Mg(2+). Residues glutamate 351–lysine 386 are disordered. The segment covering glycine 356 to lysine 386 has biased composition (acidic residues).

Belongs to the TRAFAC class OBG-HflX-like GTPase superfamily. OBG GTPase family. In terms of assembly, monomer. Requires Mg(2+) as cofactor.

It is found in the cytoplasm. Its function is as follows. An essential GTPase which binds GTP, GDP and possibly (p)ppGpp with moderate affinity, with high nucleotide exchange rates and a fairly low GTP hydrolysis rate. Plays a role in control of the cell cycle, stress response, ribosome biogenesis and in those bacteria that undergo differentiation, in morphogenesis control. The polypeptide is GTPase Obg (Bacteroides fragilis (strain YCH46)).